The primary structure comprises 158 residues: Regulator of sigma D (158 aa).

The protein belongs to the Rsd/AlgQ family. In terms of assembly, interacts with RpoD.

The protein localises to the cytoplasm. Functionally, binds RpoD and negatively regulates RpoD-mediated transcription activation by preventing the interaction between the primary sigma factor RpoD with the catalytic core of the RNA polymerase and with promoter DNA. May be involved in replacement of the RNA polymerase sigma subunit from RpoD to RpoS during the transition from exponential growth to the stationary phase. The polypeptide is Regulator of sigma D (Escherichia coli O127:H6 (strain E2348/69 / EPEC)).